Here is a 194-residue protein sequence, read N- to C-terminus: RxLR effector protein Avh240 (194 aa).

The first 23 residues, 1 to 23 (MRPYFTLLLALAFILACTNLVEA), serve as a signal peptide directing secretion. The RxLR-dEER signature appears at 38-57 (RHLRTAVASVVDLPDDEDER). Positions 58–108 (LLGYNTVQLWRMRRTANKLMNGKLTTQKEAALKKWMASQQDKFLAKWLKSS) are host plasma membrane-binding.

This sequence belongs to the RxLR effector family. As to quaternary structure, homodimer. Interacts with host soybean aspartic protease AP1.

The protein localises to the secreted. It is found in the host cell membrane. Effector that suppresses plant defense responses during the early stages of pathogen infection. Suppresses cell death induced by effectors and PAMPs in plant hosts. Avh240 dimerizes and localizes at the plasma membrane to interfere with aspartic protease AP1 secretion, which presents an effective mechanism by which effector proteins suppress plant apoplastic immunity. This is RxLR effector protein Avh240 from Phytophthora sojae (Soybean stem and root rot agent).